The primary structure comprises 276 residues: Aliphatic sulfonates import ATP-binding protein SsuB 1 (276 aa).

The tract at residues 1–21 (MSTGNVTTLRRPEAPPSLPAG) is disordered. Residues 39–259 (FSFRNVTKSF…RHGTPEFARL (221 aa)) enclose the ABC transporter domain. 71-78 (GKSGCGKS) contributes to the ATP binding site.

Belongs to the ABC transporter superfamily. Aliphatic sulfonates importer (TC 3.A.1.17.2) family. The complex is composed of two ATP-binding proteins (SsuB), two transmembrane proteins (SsuC) and a solute-binding protein (SsuA).

It is found in the cell inner membrane. The enzyme catalyses ATP + H2O + aliphatic sulfonate-[sulfonate-binding protein]Side 1 = ADP + phosphate + aliphatic sulfonateSide 2 + [sulfonate-binding protein]Side 1.. In terms of biological role, part of the ABC transporter complex SsuABC involved in aliphatic sulfonates import. Responsible for energy coupling to the transport system. In Agrobacterium fabrum (strain C58 / ATCC 33970) (Agrobacterium tumefaciens (strain C58)), this protein is Aliphatic sulfonates import ATP-binding protein SsuB 1.